Consider the following 279-residue polypeptide: Pantothenate synthetase (279 aa).

31–38 provides a ligand contact to ATP; that stretch reads MGNLHGGH. The Proton donor role is filled by His38. Position 62 (Gln62) interacts with (R)-pantoate. Gln62 is a binding site for beta-alanine. 150–153 is an ATP binding site; the sequence is GRKD. Position 156 (Gln156) interacts with (R)-pantoate. ATP is bound by residues Val179 and 187 to 190; that span reads KSSR.

Belongs to the pantothenate synthetase family. As to quaternary structure, homodimer.

The protein localises to the cytoplasm. It carries out the reaction (R)-pantoate + beta-alanine + ATP = (R)-pantothenate + AMP + diphosphate + H(+). The protein operates within cofactor biosynthesis; (R)-pantothenate biosynthesis; (R)-pantothenate from (R)-pantoate and beta-alanine: step 1/1. Functionally, catalyzes the condensation of pantoate with beta-alanine in an ATP-dependent reaction via a pantoyl-adenylate intermediate. This chain is Pantothenate synthetase, found in Stenotrophomonas maltophilia (strain R551-3).